We begin with the raw amino-acid sequence, 223 residues long: MSTSPLVIAIDGPSGSGKSSTSRGVANRLGLARLDTGSMYRAVACRVAHLGIDPTTNPRDAIKVAQSCHLEIDTSAIDDRVVIDGEDVTKEIRDPQTSAKVSAVATIQPVRDALTARMRQVAADRGRIVMEGRDITTVVCPDAQVRVLLVADPAIRVARRQAELGEKVDMAQVIDSIVRRDRDDSTVSTFEEPAEGVTVVDSTHLNLDQVIDAVIDLVPVTLR.

A disordered region spans residues 1-23 (MSTSPLVIAIDGPSGSGKSSTSR). ATP is bound at residue 12–20 (GPSGSGKSS).

Belongs to the cytidylate kinase family. Type 1 subfamily.

The protein resides in the cytoplasm. The catalysed reaction is CMP + ATP = CDP + ADP. The enzyme catalyses dCMP + ATP = dCDP + ADP. This is Cytidylate kinase from Cutibacterium acnes (strain DSM 16379 / KPA171202) (Propionibacterium acnes).